We begin with the raw amino-acid sequence, 430 residues long: Serine--tRNA ligase (430 aa).

The interval 44-65 (TESLQAERNSRSKSIGAAKARG) is disordered. 237–239 (TAE) lines the L-serine pocket. 268–270 (RSE) contributes to the ATP binding site. Glu-291 lines the L-serine pocket. Position 355-358 (355-358 (EISS)) interacts with ATP. Ser-391 provides a ligand contact to L-serine.

This sequence belongs to the class-II aminoacyl-tRNA synthetase family. Type-1 seryl-tRNA synthetase subfamily. As to quaternary structure, homodimer. The tRNA molecule binds across the dimer.

It localises to the cytoplasm. It carries out the reaction tRNA(Ser) + L-serine + ATP = L-seryl-tRNA(Ser) + AMP + diphosphate + H(+). The catalysed reaction is tRNA(Sec) + L-serine + ATP = L-seryl-tRNA(Sec) + AMP + diphosphate + H(+). The protein operates within aminoacyl-tRNA biosynthesis; selenocysteinyl-tRNA(Sec) biosynthesis; L-seryl-tRNA(Sec) from L-serine and tRNA(Sec): step 1/1. Its function is as follows. Catalyzes the attachment of serine to tRNA(Ser). Is also able to aminoacylate tRNA(Sec) with serine, to form the misacylated tRNA L-seryl-tRNA(Sec), which will be further converted into selenocysteinyl-tRNA(Sec). The sequence is that of Serine--tRNA ligase from Edwardsiella ictaluri (strain 93-146).